The primary structure comprises 181 residues: Probable chemoreceptor glutamine deamidase CheD (181 aa).

The protein belongs to the CheD family.

It catalyses the reaction L-glutaminyl-[protein] + H2O = L-glutamyl-[protein] + NH4(+). Probably deamidates glutamine residues to glutamate on methyl-accepting chemotaxis receptors (MCPs), playing an important role in chemotaxis. The polypeptide is Probable chemoreceptor glutamine deamidase CheD (Agrobacterium fabrum (strain C58 / ATCC 33970) (Agrobacterium tumefaciens (strain C58))).